We begin with the raw amino-acid sequence, 319 residues long: MSKKTKQELENNKLSKRLRHAVGDTINDFNMIEPGDKIMVCLSGGKDSYALLDILRRLQASAPIDFELVAVNLDQKQPGFPEEVLPTYLESIGVPYKIVEEDTYSTVKRVLDEGKTTCSLCSRLRRGILYRTAKELGCTKIALGHHRDDILATMFLNMFYGGKLKAMPPKLVSDNGEHIVIRPLAYVKEKDLIKYAELKQFPIIPCNLCGSQPNLQRQVIGDMLRDWDKRFPGRIESMFSALQNVVPSHLADTELFDFAGLERGQNLKHGGDLAFDSEKMPERFSDGSEEDESEIKIEPQKAERKVINILANKPKTCGA.

The PP-loop motif motif lies at 43–48 (SGGKDS). [4Fe-4S] cluster contacts are provided by Cys-118, Cys-121, and Cys-209.

It belongs to the TtcA family. As to quaternary structure, homodimer. Mg(2+) is required as a cofactor. [4Fe-4S] cluster serves as cofactor.

It localises to the cytoplasm. The enzyme catalyses cytidine(32) in tRNA + S-sulfanyl-L-cysteinyl-[cysteine desulfurase] + AH2 + ATP = 2-thiocytidine(32) in tRNA + L-cysteinyl-[cysteine desulfurase] + A + AMP + diphosphate + H(+). Its pathway is tRNA modification. Its function is as follows. Catalyzes the ATP-dependent 2-thiolation of cytidine in position 32 of tRNA, to form 2-thiocytidine (s(2)C32). The sulfur atoms are provided by the cysteine/cysteine desulfurase (IscS) system. This chain is tRNA-cytidine(32) 2-sulfurtransferase, found in Neisseria gonorrhoeae (strain NCCP11945).